Consider the following 210-residue polypeptide: 7-methyl-GTP pyrophosphatase (210 aa).

Catalysis depends on D79, which acts as the Proton acceptor.

It belongs to the Maf family. YceF subfamily. It depends on a divalent metal cation as a cofactor.

It is found in the cytoplasm. It carries out the reaction N(7)-methyl-GTP + H2O = N(7)-methyl-GMP + diphosphate + H(+). Its function is as follows. Nucleoside triphosphate pyrophosphatase that hydrolyzes 7-methyl-GTP (m(7)GTP). May have a dual role in cell division arrest and in preventing the incorporation of modified nucleotides into cellular nucleic acids. This is 7-methyl-GTP pyrophosphatase from Burkholderia orbicola (strain AU 1054).